A 340-amino-acid polypeptide reads, in one-letter code: UDP-3-O-(3-hydroxymyristoyl)glucosamine N-acyltransferase (340 aa).

The active-site Proton acceptor is the H239.

The protein belongs to the transferase hexapeptide repeat family. LpxD subfamily. As to quaternary structure, homotrimer.

The catalysed reaction is a UDP-3-O-[(3R)-3-hydroxyacyl]-alpha-D-glucosamine + a (3R)-hydroxyacyl-[ACP] = a UDP-2-N,3-O-bis[(3R)-3-hydroxyacyl]-alpha-D-glucosamine + holo-[ACP] + H(+). It carries out the reaction UDP-3-O-[(3R)-3-hydroxytetradecanoyl]-alpha-D-glucosamine + (3R)-hydroxytetradecanoyl-[ACP] = UDP-2-N,3-O-bis[(3R)-3-hydroxytetradecanoyl]-alpha-D-glucosamine + holo-[ACP] + H(+). The protein operates within glycolipid biosynthesis; lipid IV(A) biosynthesis; lipid IV(A) from (3R)-3-hydroxytetradecanoyl-[acyl-carrier-protein] and UDP-N-acetyl-alpha-D-glucosamine: step 3/6. In terms of biological role, catalyzes the N-acylation of UDP-3-O-(hydroxytetradecanoyl)glucosamine using 3-hydroxytetradecanoyl-ACP as the acyl donor. Is involved in the biosynthesis of lipid A, a phosphorylated glycolipid that anchors the lipopolysaccharide to the outer membrane of the cell. In Wigglesworthia glossinidia brevipalpis, this protein is UDP-3-O-(3-hydroxymyristoyl)glucosamine N-acyltransferase.